The following is a 136-amino-acid chain: Ribonuclease YqgF (136 aa).

It belongs to the YqgF nuclease family. As to quaternary structure, monomer; also forms low amounts of dimers. The cofactor is Mn(2+).

It localises to the cytoplasm. Has robust sequence-specific RNase activity, acting as a 5'-3' exo/endonuclease on ssRNA substrates with minimally 3 consecutive adenine bases. Has no detectable nuclease activity on dsRNA, dsDNA or Holliday junction DNA. The sequence is that of Ribonuclease YqgF from Deinococcus radiodurans (strain ATCC 13939 / DSM 20539 / JCM 16871 / CCUG 27074 / LMG 4051 / NBRC 15346 / NCIMB 9279 / VKM B-1422 / R1).